Reading from the N-terminus, the 260-residue chain is tRNA pseudouridine synthase B (260 aa).

His-44 is a substrate binding site. The Nucleophile role is filled by Asp-49. Positions 77, 180, and 201 each coordinate substrate.

This sequence belongs to the pseudouridine synthase TruB family. Type 1 subfamily.

It catalyses the reaction uridine(55) in tRNA = pseudouridine(55) in tRNA. Responsible for synthesis of pseudouridine from uracil-55 in the psi GC loop of transfer RNAs. This Blochmanniella pennsylvanica (strain BPEN) protein is tRNA pseudouridine synthase B.